The primary structure comprises 674 residues: Transcription activator of gluconeogenesis PMAA_028970 (674 aa).

Residues methionine 1–lysine 46 form a disordered region. Over residues aspartate 14 to lysine 25 the composition is skewed to basic and acidic residues. A DNA-binding region (zn(2)-C6 fungal-type) is located at residues cysteine 52–cysteine 80. Disordered regions lie at residues isoleucine 117 to alanine 181, threonine 250 to tyrosine 321, isoleucine 344 to lysine 374, and asparagine 519 to asparagine 557. Positions threonine 120–tyrosine 148 are enriched in polar residues. A compositionally biased stretch (low complexity) spans asparagine 149–threonine 163. 2 stretches are compositionally biased toward polar residues: residues glycine 269–glycine 278 and threonine 285–phenylalanine 294. Composition is skewed to low complexity over residues threonine 348 to serine 366 and asparagine 529 to serine 540.

Belongs to the ERT1/acuK family.

Its subcellular location is the nucleus. Functionally, transcription factor which regulates nonfermentable carbon utilization. Activator of gluconeogenetic genes. In Talaromyces marneffei (strain ATCC 18224 / CBS 334.59 / QM 7333) (Penicillium marneffei), this protein is Transcription activator of gluconeogenesis PMAA_028970.